A 230-amino-acid polypeptide reads, in one-letter code: Bidirectional sugar transporter SWEET16 (230 aa).

Over 1–3 the chain is Extracellular; that stretch reads MAD. A helical transmembrane segment spans residues 4-24; it reads LSFYVGVIGNVISVLVFLSPV. The 87-residue stretch at 6-92 folds into the MtN3/slv 1 domain; the sequence is FYVGVIGNVI…LIFLFFVPKS (87 aa). The Cytoplasmic portion of the chain corresponds to 25 to 40; the sequence is ETFWRIVQRRSTEEYE. Residues 41 to 61 traverse the membrane as a helical segment; sequence CFPYICTLMSSSLWTYYGIVT. At 62–69 the chain is on the extracellular side; that stretch reads PGEYLVST. Residues 70–90 form a helical membrane-spanning segment; the sequence is VNGFGALAESIYVLIFLFFVP. Residues 91–93 lie on the Cytoplasmic side of the membrane; sequence KSR. The helical transmembrane segment at 94–114 threads the bilayer; sequence FLKTVVVVLALNVCFPVIAIA. Residues 115-128 lie on the Extracellular side of the membrane; that stretch reads GTRTLFGDANSRSS. The chain crosses the membrane as a helical span at residues 129–149; sequence SMGFICATLNIIMYGSPLSAI. In terms of domain architecture, MtN3/slv 2 spans 129–212; it reads SMGFICATLN…LLIYAYYRNA (84 aa). Residues 150–162 are Cytoplasmic-facing; it reads KTVVTTRSVQFMP. The chain crosses the membrane as a helical span at residues 163 to 183; the sequence is FWLSFFLFLNGAIWGVYALLL. Topologically, residues 184–185 are extracellular; that stretch reads HD. A helical transmembrane segment spans residues 186–206; the sequence is MFLLVPNGMGFFLGIMQLLIY. The Cytoplasmic portion of the chain corresponds to 207–230; that stretch reads AYYRNAEPIVEDEEGLIPNQPLLA.

This sequence belongs to the SWEET sugar transporter family. Forms homooligomers and heterooligomers with SWEET1, SWEET7, SWEET8, SWEET9 and SWEET17. In terms of tissue distribution, mostly expressed in the cortex of mature roots, and, to a lower extent, in aerial organs such as leaves, stems, and flowers. Mainly present in vascular parenchyma cells, especially in the petiole vasculature, flower stalks and at the base of individual, not fully developed flowers.

The protein localises to the vacuole membrane. Its function is as follows. Mediates both low-affinity uptake and efflux of sugar across the vacuolar membrane. Regulates sugars homeostasis in leaves and roots by exporting/importing them through the tonoplast regarding metabolic demand. Acts as a vacuolar hexose transporter, such as glucose (Glc), fructose (Fru), and sucrose (Suc). The polypeptide is Bidirectional sugar transporter SWEET16 (Arabidopsis thaliana (Mouse-ear cress)).